Here is a 217-residue protein sequence, read N- to C-terminus: ATP phosphoribosyltransferase (217 aa).

The protein belongs to the ATP phosphoribosyltransferase family. Short subfamily. As to quaternary structure, heteromultimer composed of HisG and HisZ subunits.

It is found in the cytoplasm. The enzyme catalyses 1-(5-phospho-beta-D-ribosyl)-ATP + diphosphate = 5-phospho-alpha-D-ribose 1-diphosphate + ATP. The protein operates within amino-acid biosynthesis; L-histidine biosynthesis; L-histidine from 5-phospho-alpha-D-ribose 1-diphosphate: step 1/9. Catalyzes the condensation of ATP and 5-phosphoribose 1-diphosphate to form N'-(5'-phosphoribosyl)-ATP (PR-ATP). Has a crucial role in the pathway because the rate of histidine biosynthesis seems to be controlled primarily by regulation of HisG enzymatic activity. The polypeptide is ATP phosphoribosyltransferase (Prochlorococcus marinus (strain MIT 9313)).